The chain runs to 255 residues: MVKIFIDPGHGGSDPGATGNGLQEKTLTLQIALALRTILTNEYEGVSLLLSRTSDQYVSLNDRTNAANNWGADFFLSIHVNSGGGTGFESYIYPDVGAPTTTYQSTIHSEVIQAVDFADRGKKTANFHVLRESAMPALLTENGFIDTVSDANKLKTSSFIQSLARGHANGLEQAFNLKKTSSSGLYKVQIGAFKVKANADSLASNAEAKGFDSIVLLKDGLYKVQIGAFSSKDNADTLAARAKNAGFDAIVILES.

Positions Ile4–Glu172 constitute a MurNAc-LAA domain. Zn(2+) is bound by residues His10, Glu24, and His79. Residue Glu141 is part of the active site. The 75-residue stretch at Thr180–Glu254 folds into the SPOR domain. Tandem repeats lie at residues Gly184–Asp219 and Gly220–Ser255. The tract at residues Gly184–Ser255 is 2 X 35 AA approximate tandem repeats.

Belongs to the N-acetylmuramoyl-L-alanine amidase 3 family. Zn(2+) serves as cofactor.

The protein localises to the secreted. It localises to the cell wall. The enzyme catalyses Hydrolyzes the link between N-acetylmuramoyl residues and L-amino acid residues in certain cell-wall glycopeptides.. With respect to regulation, inhibited by EDTA. In terms of biological role, autolysins are involved in some important biological processes such as cell separation, cell-wall turnover, competence for genetic transformation, formation of the flagella - in particular of its basal body - and sporulation. CwlC is able to hydrolyze type A cell walls such as B.subtilis. Its main function is to lyze the mother cell wall peptidoglycan, playing a role during sporulation. The chain is Sporulation-specific N-acetylmuramoyl-L-alanine amidase (cwlC) from Bacillus subtilis (strain 168).